A 75-amino-acid polypeptide reads, in one-letter code: Small ribosomal subunit protein bS18 (75 aa).

The protein belongs to the bacterial ribosomal protein bS18 family. As to quaternary structure, part of the 30S ribosomal subunit. Forms a tight heterodimer with protein bS6.

Its function is as follows. Binds as a heterodimer with protein bS6 to the central domain of the 16S rRNA, where it helps stabilize the platform of the 30S subunit. The sequence is that of Small ribosomal subunit protein bS18 from Chromobacterium violaceum (strain ATCC 12472 / DSM 30191 / JCM 1249 / CCUG 213 / NBRC 12614 / NCIMB 9131 / NCTC 9757 / MK).